The primary structure comprises 457 residues: Siroheme synthase (457 aa).

The interval 1 to 204 (MDHLPIFCQL…NDQKAITETT (204 aa)) is precorrin-2 dehydrogenase /sirohydrochlorin ferrochelatase. NAD(+) contacts are provided by residues 22–23 (DV) and 43–44 (LA). Ser128 carries the post-translational modification Phosphoserine. The tract at residues 216 to 457 (GEVVLVGAGP…RDKLNWFSNH (242 aa)) is uroporphyrinogen-III C-methyltransferase. Residue Pro225 participates in S-adenosyl-L-methionine binding. Asp248 (proton acceptor) is an active-site residue. The active-site Proton donor is the Lys270. S-adenosyl-L-methionine contacts are provided by residues 301-303 (GGD), Ile306, 331-332 (TA), Met382, and Gly411.

It in the N-terminal section; belongs to the precorrin-2 dehydrogenase / sirohydrochlorin ferrochelatase family. This sequence in the C-terminal section; belongs to the precorrin methyltransferase family.

The catalysed reaction is uroporphyrinogen III + 2 S-adenosyl-L-methionine = precorrin-2 + 2 S-adenosyl-L-homocysteine + H(+). It carries out the reaction precorrin-2 + NAD(+) = sirohydrochlorin + NADH + 2 H(+). The enzyme catalyses siroheme + 2 H(+) = sirohydrochlorin + Fe(2+). It participates in cofactor biosynthesis; adenosylcobalamin biosynthesis; precorrin-2 from uroporphyrinogen III: step 1/1. The protein operates within cofactor biosynthesis; adenosylcobalamin biosynthesis; sirohydrochlorin from precorrin-2: step 1/1. Its pathway is porphyrin-containing compound metabolism; siroheme biosynthesis; precorrin-2 from uroporphyrinogen III: step 1/1. It functions in the pathway porphyrin-containing compound metabolism; siroheme biosynthesis; siroheme from sirohydrochlorin: step 1/1. It participates in porphyrin-containing compound metabolism; siroheme biosynthesis; sirohydrochlorin from precorrin-2: step 1/1. Multifunctional enzyme that catalyzes the SAM-dependent methylations of uroporphyrinogen III at position C-2 and C-7 to form precorrin-2 via precorrin-1. Then it catalyzes the NAD-dependent ring dehydrogenation of precorrin-2 to yield sirohydrochlorin. Finally, it catalyzes the ferrochelation of sirohydrochlorin to yield siroheme. In Escherichia coli O45:K1 (strain S88 / ExPEC), this protein is Siroheme synthase.